The primary structure comprises 496 residues: GTPase Der (496 aa).

2 EngA-type G domains span residues 3-168 (PIIA…VPEK) and 210-383 (IKLA…DCST). GTP-binding positions include 9-16 (GRPNVGKS), 56-60 (DTGGI), 120-123 (NKID), 216-223 (GRPNVGKS), 263-267 (DTAGV), and 328-331 (NKWD). Positions 384 to 468 (KRINTSLLTR…PIRIQFKESE (85 aa)) constitute a KH-like domain.

The protein belongs to the TRAFAC class TrmE-Era-EngA-EngB-Septin-like GTPase superfamily. EngA (Der) GTPase family. In terms of assembly, associates with the 50S ribosomal subunit.

GTPase that plays an essential role in the late steps of ribosome biogenesis. The sequence is that of GTPase Der from Hamiltonella defensa subsp. Acyrthosiphon pisum (strain 5AT).